A 265-amino-acid chain; its full sequence is UPF0354 protein GWCH70_2742 (265 aa).

The protein belongs to the UPF0354 family.

The polypeptide is UPF0354 protein GWCH70_2742 (Geobacillus sp. (strain WCH70)).